Consider the following 260-residue polypeptide: Mitochondrial import inner membrane translocase subunit Tim29 (260 aa).

A mitochondrion-targeting transit peptide spans 1 to 31 (MAAAALRRFWSRRRAEAGDAVVAKPGVWARL). At 32-59 (GSWARALLRDYAEACRDASAEARARPGR) the chain is on the mitochondrial matrix side. The chain crosses the membrane as a helical span at residues 60–77 (AAVYVGLLGGAAACFTLA). At 78–260 (PSEGAFEEAL…HSLVQAEAPR (183 aa)) the chain is on the mitochondrial intermembrane side.

Component of the TIM22 complex, which core is composed of TIMM22, associated with TIMM10 (TIMM10A and/or TIMM10B), TIMM9, AGK and TIMM29. Interacts with TIMM10B; the interaction is direct. Interacts with TOMM40; linking the TIM22 complex to the TOM complex. Interacts with TIMM22 (when oxidized); the interaction is direct.

The protein localises to the mitochondrion inner membrane. Functionally, component of the TIM22 complex, a complex that mediates the import and insertion of multi-pass transmembrane proteins into the mitochondrial inner membrane. The TIM22 complex forms a twin-pore translocase that uses the membrane potential as the external driving force. Required for the stability of the TIM22 complex and functions in the assembly of the TIMM22 protein into the TIM22 complex. May facilitate cooperation between TIM22 and TOM complexes by interacting with TOMM40. The protein is Mitochondrial import inner membrane translocase subunit Tim29 of Homo sapiens (Human).